The sequence spans 133 residues: Hydrogenase maturation factor HypA (133 aa).

A Ni(2+)-binding site is contributed by His-2. Residues Cys-73, Cys-75, Cys-105, and Cys-108 each contribute to the Zn(2+) site.

Belongs to the HypA/HybF family.

Its function is as follows. Involved in the maturation of [NiFe] hydrogenases. Required for nickel insertion into the metal center of the hydrogenase. The polypeptide is Hydrogenase maturation factor HypA (Methanosarcina acetivorans (strain ATCC 35395 / DSM 2834 / JCM 12185 / C2A)).